The chain runs to 548 residues: T-complex protein 1 subunit theta (548 aa).

Position 2 is an N-acetylalanine (Ala-2). Position 23 is a phosphoserine (Ser-23). Tyr-30 carries the post-translational modification Phosphotyrosine. Positions 47 and 48 each coordinate ADP. Asp-99 is a Mg(2+) binding site. Residues Gly-100, Thr-101, Asn-102, and Phe-103 each contribute to the ADP site. ATP contacts are provided by Gly-100, Thr-101, and Asn-102. A Phosphoserine modification is found at Ser-162. Met-169, Ser-170, and Lys-171 together coordinate ADP. The ATP site is built by Ser-170 and Lys-171. Ser-213 carries the post-translational modification Phosphoserine. Residues Lys-224, Lys-254, and Lys-260 each participate in a glycyl lysine isopeptide (Lys-Gly) (interchain with G-Cter in SUMO2) cross-link. 2 positions are modified to phosphoserine: Ser-269 and Ser-317. Lys-318 and Lys-400 each carry N6-acetyllysine. Gly-412 is an ADP binding site. Residue Gly-412 coordinates ATP. Lys-459 is covalently cross-linked (Glycyl lysine isopeptide (Lys-Gly) (interchain with G-Cter in SUMO1)). Lys-466 carries the post-translational modification N6-acetyllysine. Asp-499 is an ADP binding site. Residues Asp-499 and Lys-504 each contribute to the ATP site. Phosphotyrosine is present on Tyr-505. The disordered stretch occupies residues 529 to 548 (PAGGPKPPSGKKDWDDDQND). Lys-534 participates in a covalent cross-link: Glycyl lysine isopeptide (Lys-Gly) (interchain with G-Cter in SUMO2). Position 537 is a phosphoserine (Ser-537). Residue Lys-539 forms a Glycyl lysine isopeptide (Lys-Gly) (interchain with G-Cter in SUMO2) linkage.

It belongs to the TCP-1 chaperonin family. As to quaternary structure, component of the chaperonin-containing T-complex (TRiC), a hexadecamer composed of two identical back-to-back stacked rings enclosing a protein folding chamber. Each ring is made up of eight different subunits: TCP1/CCT1, CCT2, CCT3, CCT4, CCT5, CCT6A/CCT6, CCT7, CCT8. Interacts with PACRG. Interacts with DNAAF4. Interacts with synaptic plasticity regulator PANTS.

The protein localises to the cytoplasm. The protein resides in the cytoskeleton. It localises to the microtubule organizing center. It is found in the centrosome. Its subcellular location is the cilium basal body. The catalysed reaction is ATP + H2O = ADP + phosphate + H(+). In terms of biological role, component of the chaperonin-containing T-complex (TRiC), a molecular chaperone complex that assists the folding of actin, tubulin and other proteins upon ATP hydrolysis. The TRiC complex mediates the folding of WRAP53/TCAB1, thereby regulating telomere maintenance. As part of the TRiC complex may play a role in the assembly of BBSome, a complex involved in ciliogenesis regulating transports vesicles to the cilia. The protein is T-complex protein 1 subunit theta (CCT8) of Macaca fascicularis (Crab-eating macaque).